Reading from the N-terminus, the 444-residue chain is Signal recognition particle 54 kDa protein (444 aa).

Residues 102–109, 184–188, and 244–247 contribute to the GTP site; these read GVQGSGKT, DTAGR, and SKMD.

The protein belongs to the GTP-binding SRP family. SRP54 subfamily. As to quaternary structure, part of the signal recognition particle protein translocation system, which is composed of SRP and FtsY. Archaeal SRP consists of a 7S RNA molecule of 300 nucleotides and two protein subunits: SRP54 and SRP19.

The protein resides in the cytoplasm. It carries out the reaction GTP + H2O = GDP + phosphate + H(+). In terms of biological role, involved in targeting and insertion of nascent membrane proteins into the cytoplasmic membrane. Binds to the hydrophobic signal sequence of the ribosome-nascent chain (RNC) as it emerges from the ribosomes. The SRP-RNC complex is then targeted to the cytoplasmic membrane where it interacts with the SRP receptor FtsY. The sequence is that of Signal recognition particle 54 kDa protein from Sulfolobus acidocaldarius (strain ATCC 33909 / DSM 639 / JCM 8929 / NBRC 15157 / NCIMB 11770).